The following is a 247-amino-acid chain: ATP synthase subunit a, chloroplastic (247 aa).

Helical transmembrane passes span 38 to 58 (QVLI…ALAV), 95 to 115 (VPFI…GALL), 134 to 154 (INTT…AGLT), 199 to 219 (LVVV…VMFL), and 220 to 240 (GLFT…AYIG).

This sequence belongs to the ATPase A chain family. F-type ATPases have 2 components, CF(1) - the catalytic core - and CF(0) - the membrane proton channel. CF(1) has five subunits: alpha(3), beta(3), gamma(1), delta(1), epsilon(1). CF(0) has four main subunits: a, b, b' and c.

It localises to the plastid. The protein localises to the chloroplast thylakoid membrane. Its function is as follows. Key component of the proton channel; it plays a direct role in the translocation of protons across the membrane. The sequence is that of ATP synthase subunit a, chloroplastic from Helianthus annuus (Common sunflower).